The chain runs to 172 residues: Adenine phosphoribosyltransferase (172 aa).

This sequence belongs to the purine/pyrimidine phosphoribosyltransferase family. As to quaternary structure, homodimer.

It is found in the cytoplasm. The catalysed reaction is AMP + diphosphate = 5-phospho-alpha-D-ribose 1-diphosphate + adenine. Its pathway is purine metabolism; AMP biosynthesis via salvage pathway; AMP from adenine: step 1/1. Catalyzes a salvage reaction resulting in the formation of AMP, that is energically less costly than de novo synthesis. In Ligilactobacillus salivarius (strain UCC118) (Lactobacillus salivarius), this protein is Adenine phosphoribosyltransferase.